The sequence spans 209 residues: Transmembrane protein 52 (209 aa).

The N-terminal stretch at 1 to 32 is a signal peptide; it reads MARGPLAARGLRLLLPLLPLLPLLPLPQVALG. The chain crosses the membrane as a helical span at residues 56–76; it reads VGLILLAVLLLLLCGVTAGCV. Positions 145 to 209 are disordered; sequence AYSLYTPEPP…QLPPCSPGAP (65 aa). Basic and acidic residues predominate over residues 159 to 170; the sequence is EAVKMAKPREEG. Over residues 186 to 202 the composition is skewed to polar residues; sequence LETTPVPQESGPNTQLP.

The protein localises to the membrane. In Homo sapiens (Human), this protein is Transmembrane protein 52 (TMEM52).